The following is a 252-amino-acid chain: Pyridoxine 5'-phosphate synthase (252 aa).

Asn8 and Arg19 together coordinate 3-amino-2-oxopropyl phosphate. Catalysis depends on His44, which acts as the Proton acceptor. Residues Arg46 and His51 each contribute to the 1-deoxy-D-xylulose 5-phosphate site. Residue Glu75 is the Proton acceptor of the active site. Thr110 serves as a coordination point for 1-deoxy-D-xylulose 5-phosphate. His201 acts as the Proton donor in catalysis. Residues Asp202 and Gly224–His225 each bind 3-amino-2-oxopropyl phosphate.

Belongs to the PNP synthase family. As to quaternary structure, homooctamer; tetramer of dimers.

Its subcellular location is the cytoplasm. The catalysed reaction is 3-amino-2-oxopropyl phosphate + 1-deoxy-D-xylulose 5-phosphate = pyridoxine 5'-phosphate + phosphate + 2 H2O + H(+). It functions in the pathway cofactor biosynthesis; pyridoxine 5'-phosphate biosynthesis; pyridoxine 5'-phosphate from D-erythrose 4-phosphate: step 5/5. Catalyzes the complicated ring closure reaction between the two acyclic compounds 1-deoxy-D-xylulose-5-phosphate (DXP) and 3-amino-2-oxopropyl phosphate (1-amino-acetone-3-phosphate or AAP) to form pyridoxine 5'-phosphate (PNP) and inorganic phosphate. The protein is Pyridoxine 5'-phosphate synthase of Albidiferax ferrireducens (strain ATCC BAA-621 / DSM 15236 / T118) (Rhodoferax ferrireducens).